The following is a 134-amino-acid chain: Interleukin-5 (134 aa).

Positions 1 to 19 (MRMLLHLSLLALGASYMYA) are cleaved as a signal peptide. Residue Thr22 is glycosylated (O-linked (GalNAc...) threonine). Asn47 and Asn90 each carry an N-linked (GlcNAc...) asparagine glycan.

The protein belongs to the IL-5 family. As to quaternary structure, homodimer; disulfide-linked. Interacts with IL5RA. Interacts with CSF2RB.

Its subcellular location is the secreted. In terms of biological role, homodimeric cytokine expressed predominantly by T-lymphocytes and NK cells that plays an important role in the survival, differentiation, and chemotaxis of eosinophils. Also acts on activated and resting B-cells to induce immunoglobulin production, growth, and differentiation. Mechanistically, exerts its biological effects through a receptor composed of IL5RA subunit and the cytokine receptor common subunit beta/CSF2RB. Binding to the receptor leads to activation of various kinases including LYN, SYK and JAK2 and thereby propagates signals through the RAS-MAPK and JAK-STAT5 pathways respectively. In Cercocebus atys (Sooty mangabey), this protein is Interleukin-5 (IL5).